A 231-amino-acid chain; its full sequence is Uridylate kinase (231 aa).

9 to 12 is a binding site for ATP; sequence KLSG. Residue glycine 49 coordinates UMP. ATP is bound by residues glycine 50 and arginine 54. UMP is bound by residues aspartate 69 and 130 to 137; that span reads AGMPYFST. ATP-binding residues include asparagine 158, tyrosine 164, and aspartate 167.

This sequence belongs to the UMP kinase family. As to quaternary structure, homohexamer.

It localises to the cytoplasm. It catalyses the reaction UMP + ATP = UDP + ADP. It functions in the pathway pyrimidine metabolism; CTP biosynthesis via de novo pathway; UDP from UMP (UMPK route): step 1/1. Its activity is regulated as follows. Inhibited by UTP. In terms of biological role, catalyzes the reversible phosphorylation of UMP to UDP. The protein is Uridylate kinase of Tropheryma whipplei (strain Twist) (Whipple's bacillus).